Here is a 472-residue protein sequence, read N- to C-terminus: Probable glycine dehydrogenase (decarboxylating) subunit 2 (472 aa).

K268 bears the N6-(pyridoxal phosphate)lysine mark.

Belongs to the GcvP family. C-terminal subunit subfamily. As to quaternary structure, the glycine cleavage system is composed of four proteins: P, T, L and H. In this organism, the P 'protein' is a heterodimer of two subunits. Requires pyridoxal 5'-phosphate as cofactor.

The enzyme catalyses N(6)-[(R)-lipoyl]-L-lysyl-[glycine-cleavage complex H protein] + glycine + H(+) = N(6)-[(R)-S(8)-aminomethyldihydrolipoyl]-L-lysyl-[glycine-cleavage complex H protein] + CO2. In terms of biological role, the glycine cleavage system catalyzes the degradation of glycine. The P protein binds the alpha-amino group of glycine through its pyridoxal phosphate cofactor; CO(2) is released and the remaining methylamine moiety is then transferred to the lipoamide cofactor of the H protein. The sequence is that of Probable glycine dehydrogenase (decarboxylating) subunit 2 from Thermoplasma acidophilum (strain ATCC 25905 / DSM 1728 / JCM 9062 / NBRC 15155 / AMRC-C165).